Consider the following 217-residue polypeptide: MTRIKICGITRMEDARAAALFGADALGFNFSPESPRCVTKDAARTMVCALPPFIEGVGVFVEQDPREIIEICRYCGLSVAQLHGSRYSEEETKLVLEGVRVLKVFRPETDFTPAAVLRFREATGVSAFLFDTYRPGMEGGTGEQMEGSLAERIFSGLPEGCYGVLAGGLNPGNVREAVQSLRPYALDTASGVEESPGIKSHEKMQAFVQAVRAAGER.

It belongs to the TrpF family.

The enzyme catalyses N-(5-phospho-beta-D-ribosyl)anthranilate = 1-(2-carboxyphenylamino)-1-deoxy-D-ribulose 5-phosphate. The protein operates within amino-acid biosynthesis; L-tryptophan biosynthesis; L-tryptophan from chorismate: step 3/5. This is N-(5'-phosphoribosyl)anthranilate isomerase from Chlorobium luteolum (strain DSM 273 / BCRC 81028 / 2530) (Pelodictyon luteolum).